The chain runs to 80 residues: Conotoxin VnMSGL-0123 (80 aa).

An N-terminal signal peptide occupies residues 1–20 (MSGLGIMVLTLLLLVSMATS). Positions 21 to 44 (HQDGGGKQATQRDAINVRRRRSIT) are excised as a propeptide. Cystine bridges form between cysteine 53-cysteine 65, cysteine 57-cysteine 74, and cysteine 64-cysteine 78. Phenylalanine 79 is modified (phenylalanine amide).

It belongs to the conotoxin O3 superfamily. In terms of tissue distribution, expressed by the venom duct.

The protein localises to the secreted. In Conus ventricosus (Mediterranean cone), this protein is Conotoxin VnMSGL-0123.